The chain runs to 409 residues: MKYFVNADFALSRPPEGPVAIYIIPFAEWLVDRGYGLVSTRNQVLMAAGFSSWLRQKGIGLSDINGEHAGRYLLDRVQRPKLGDDAALRHLLAFLRSQNAIAEEIEVDHNPSAVEQHVQAYERHLRDARALSRQTIINYRPVVRDFLSFRFGDGEISLAQLRAADVTDFVQKKVSRLNMRRAKIVTTALRSFLSYARYRGDITSDLAAAVPIVANWSLSSIPRAIGRDDVSRLLSSIDRDTPIGCRDYAMILALARLGLRSSEVVTLELDDIDWVAGRIRVRGKHGRNELPLPADVGEAIADYLWRARPRNASRRVFLRDKAPIRGFVGPSGLGSIVRRSLKRTGIDSPTKGTHQFRHGLASEMLRGGASLGEIGEVLGHRHVQTTAIYAKVDLDALRTLALPWPGEAQ.

In terms of domain architecture, Core-binding (CB) spans 112-197 (SAVEQHVQAY…ALRSFLSYAR (86 aa)). Positions 220-402 (SIPRAIGRDD…DLDALRTLAL (183 aa)) constitute a Tyr recombinase domain. Catalysis depends on residues Arg-260, Lys-284, His-354, Arg-357, and His-380. The O-(3'-phospho-DNA)-tyrosine intermediate role is filled by Tyr-389.

Belongs to the 'phage' integrase family.

This chain is Putative integrase/recombinase y4rA, found in Sinorhizobium fredii (strain NBRC 101917 / NGR234).